The following is an 829-amino-acid chain: Isethionate sulfite-lyase (829 aa).

A PFL domain is found at 31–699; that stretch reads ERVFNILDSF…VVSATPNGRL (669 aa). 2-hydroxyethane-1-sulfonate is bound by residues arginine 188, glutamine 192, 467–469, and arginine 677; that span reads CTE. The active-site Cysteine radical intermediate is the cysteine 467. Catalysis depends on glutamate 469, which acts as the Proton acceptor. The 124-residue stretch at 706–829 folds into the Glycine radical domain; sequence DGSSASHGAD…LIARTQHDAM (124 aa). Glycine 804 carries the post-translational modification Glycine radical.

It belongs to the glycyl radical enzyme (GRE) family. In terms of assembly, homodimer. Post-translationally, requires the activating protein IslB to generate the key active site glycyl radical on Gly-804 that is involved in catalysis.

It catalyses the reaction 2-hydroxyethane-1-sulfonate = acetaldehyde + sulfite + H(+). It functions in the pathway organosulfur degradation; alkanesulfonate degradation. Its function is as follows. Involved in an anaerobic respiration pathway that converts the sulfonate isethionate (2-hydroxyethanesulfonate) to ammonia, acetate and sulfide. Catalyzes the radical-mediated C-S bond cleavage of isethionate (2-hydroxyethanesulfonate) to form sulfite and acetaldehyde. This Oleidesulfovibrio alaskensis (strain ATCC BAA-1058 / DSM 17464 / G20) (Desulfovibrio alaskensis) protein is Isethionate sulfite-lyase.